Here is a 249-residue protein sequence, read N- to C-terminus: 23S rRNA (guanosine-2'-O-)-methyltransferase RlmB (249 aa).

S-adenosyl-L-methionine contacts are provided by G200, I220, and L229.

It belongs to the class IV-like SAM-binding methyltransferase superfamily. RNA methyltransferase TrmH family. RlmB subfamily.

The protein resides in the cytoplasm. The catalysed reaction is guanosine(2251) in 23S rRNA + S-adenosyl-L-methionine = 2'-O-methylguanosine(2251) in 23S rRNA + S-adenosyl-L-homocysteine + H(+). Functionally, specifically methylates the ribose of guanosine 2251 in 23S rRNA. In Xylella fastidiosa (strain 9a5c), this protein is 23S rRNA (guanosine-2'-O-)-methyltransferase RlmB.